The primary structure comprises 357 residues: Chorismate synthase (357 aa).

Residues R48 and R54 each contribute to the NADP(+) site. FMN-binding positions include 125–127 (RSS), 238–239 (NA), G278, 293–297 (KPTSS), and R319.

This sequence belongs to the chorismate synthase family. In terms of assembly, homotetramer. The cofactor is FMNH2.

The enzyme catalyses 5-O-(1-carboxyvinyl)-3-phosphoshikimate = chorismate + phosphate. It participates in metabolic intermediate biosynthesis; chorismate biosynthesis; chorismate from D-erythrose 4-phosphate and phosphoenolpyruvate: step 7/7. Functionally, catalyzes the anti-1,4-elimination of the C-3 phosphate and the C-6 proR hydrogen from 5-enolpyruvylshikimate-3-phosphate (EPSP) to yield chorismate, which is the branch point compound that serves as the starting substrate for the three terminal pathways of aromatic amino acid biosynthesis. This reaction introduces a second double bond into the aromatic ring system. This is Chorismate synthase from Blochmanniella floridana.